The following is a 643-amino-acid chain: Conglutin alpha 2 (643 aa).

The first 22 residues, 1–22 (MAKPCLFSFSLCLLLLSSLCLA), serve as a signal peptide directing secretion. 2 cysteine pairs are disulfide-bonded: Cys-31-Cys-64 and Cys-107-Cys-464. The Cupin type-1 1 domain maps to 36 to 261 (LNALEPDNRV…AFNVDEEIIN (226 aa)). Disordered stretches follow at residues 110–142 (TYEE…DSHQ), 190–243 (PRRF…VLSG), and 285–458 (PKSQ…SRNG). A compositionally biased stretch (low complexity) spans 207 to 218 (QEQQGQQREQQQ). Composition is skewed to basic and acidic residues over residues 228-237 (HQQEQEEEGK) and 298-313 (PRQR…RREE). Positions 314–323 (EKEEEEEEDE) are enriched in acidic residues. 2 stretches are compositionally biased toward basic and acidic residues: residues 324 to 333 (PRSRERYERQ) and 357 to 369 (QEGR…WERT). Positions 422–433 (RGRHGGRGRRSG) are enriched in basic residues. The 147-residue stretch at 470–616 (ENIAKPSRAD…AFGLRLNQVS (147 aa)) folds into the Cupin type-1 2 domain. Positions 623 to 632 (NQGPLVSPQS) are enriched in polar residues. Residues 623-643 (NQGPLVSPQSESEDHTLPKVA) are disordered. Over residues 634–643 (SEDHTLPKVA) the composition is skewed to basic and acidic residues.

This sequence belongs to the 11S seed storage protein (globulins) family. Hexamer; each subunit is composed of an acidic and a basic chain derived from a single precursor and linked by a disulfide bond. Component of globulins complexes which accumulate in seeds.

In terms of biological role, sulfur-rich seed storage protein. This protein found in the seeds of many leguminous and non-leguminous plants is the source of sulfur-containing amino acids in seed meals. The polypeptide is Conglutin alpha 2 (Lupinus angustifolius (Narrow-leaved blue lupine)).